Reading from the N-terminus, the 3582-residue chain is MCENCADLVEVLNEISDIEGGDGLQLRKEHTLKIFAYINSWTQRQCLCCFKEYKHLEIFNQVVCALINLVIAQVQVLRDQLCKHCTTINIDSTWQDESNQAEEPLSIDRECNEGNTERQKSIEKKSNSTRTCNLTEEESSKSSDPFSLWNTDEKEKLLLCVAKIFQIQFPLYTAYKHNTHPTIEDISTQESNILGAFCDMNDVEVPLHLLRYVCLFCGKNGLSLMKDCFEYGTPETLPFLIAHAFITVVSNIRIWLHIPAVMQHIIPFRTYVIRYLCKLSDQELRQSAARNMADLMWSTVKEPLDTTLCFDKESLDLAFKYFMSPTLTMRLAGLSQITNQLHTFNDVCNNESLVSDTETSIAKELADWLISNNVVEHIFGPNLHIEIIKQCQVILNFLAAEGRLSTQHIDCIWAAAQLKHCSRYIHDLFPSLIKNLDPVPLRHLLNLVSALEPGVHTEQTLYLASMLIKALWNNALAAKAQLSKQSSFASLLNTNMPIGNKKEEEELRRAAPSPWSPAASPQSSDNSDTHQSGASDIEMDEQLINRNKHVQQRLSDTEESMQGSSDETANSGEDGSSGPGSSSGHSDGSSNEVNSSHASQSAGSPGSEVQSEDIADIEALKEEEEEEEEEEEEEEEEDDEEEEDEEEDDDDDDDHGHNPAKNTCGTELRNRKLENPAGICLGESQGTSERNGTNSGTGKDLVFNTEPLPSVDNRIRMLDACAHSEDPEHGISGEVSSAHLAQGSQEACITRSGDFLGETIGNELFNCRQFIGPQHHHHHHHHHHHHHHHHHHHHHHHDGHMVDDMLSADDVSCSSSQVSAKSEKNMADFDGEESGCEEELVQINSHAELTSHLQQHLPNLASIYHEHLSQGPAVHKHQFSSNAVTDINLDNVCKKGNTLLWDIVQDDDAINLSEGLINEAEKLLCSLVCWFTDRQIRMRFIEGCLENLGNNRSVVISLRLLPKLFGTFQQFGSSYDTHWITMWAEKELNMMKLFFDNLVYYIQGIREGRQKHALYSHSAEVQVRLQFLTCVFSTLGSPDHFRLSLEQVDILWHCLVEDSECYDDALHWFLNQVRSKDQHAMGMETYKHLFLEKMPQLKPETISMTGLNLFQHLCNLARLATSAYDGGSNSELCGMDQFWGIALRAQSGDVSRAAIQYINSYYINGKTGLEKEQEFISKCMESLMIASSSLEQESHSSLTVIERGLLMLKTHLEAFRRRFAYHLRQWQIEGTGISSHLKALSDKQSLPLRVVCQPAGLPDKMTIEMYPSDQVADLRAEVTHWYENLQKEQINQQAQLQEFGQSSRKGEFPGGLMGPVRMISSGHELTTDYDEKALHELGFKDMQMVFVSLGAPRRERKGEGVQLPASCLPPPQKDNIPMLLLLQEPHLTTLFDLLEMLASFKPPSGKVAVDDSESLKCEELHLHAENLSRRVWELLMLLPTCPNMLTAFQNVSDEQSNDGLNWKELLKIKSAHKLLYALEIIEALGKPNRRIRRESTGSYSDLYPDSDDSSEDQVENSKNSWTCKFVAAGGLQQLLEIFNSAILEPKEQESWTVWQLDCLACLLKLICQFAVDPSDLDLAYHDVFAWSGIAESHRKRTWPGKSRKAAGDHAKSLHIPRLTEVFLVLVQGTSLIQRLMSVAYTYDNLAPRVLKAQSDHRSRHEVSHYSMWLLVSWAHCCSLVKSSLADSDHLQDWLKQLTLLIPETAVRHESCNGLYKLSLSGLDGGDSIHRSFLLLAASTLLKFLPDAQALKPPRIDDYEEEPLLKPGCKEYFWLLCKLVDNIHIKDASQTTLLDLDALARHLADCIRSREILDHLDGSIEDDGLSGLLRLATSVIKHKPPFKFSREGQEFLRDIFNLLFLLPSLKDRRQPKCKSHSCRAAAYDLLVEMVKGSVENYRLIHNWVMAQHMQSHAPYKWDYWPHEDVRAECRFVGLTNLGATCYLASTIQQLYMIPEARQAVFTAKYSEDMKHKTTLLELQKMFTYLMESECKAYNPRPFCKTYTMDKQPLNTGEQKDMTEFFTDLITKVEEMSPELKNTVKSLFGGVITNNVVSLDCEHVSQTAEEFYTVRCQVADMKNIYESLDEVTIKDTLEGDNMYTCSHCGKKVRAEKRACFKKLPRILSFNTMRYTFNMVTMMKEKVNTHFSFPLRLDMTPYTEDFLMGKSDRKEGFKDVGDRSKDTESYEYDLIGVTVHTGTADGGHYYSFIRDIVNPHAYKNNKWYLFNDAEVKPFDSAQLASECFGGEMTTKTYDSVTDKFMDFSFEKTHSAYMLFYKRMEPEEENGREYKFDVSSELLEWIWHDNMQFLQDKNIFEHTYFGFMWQLCSCIPSTLPDPKAVSLMTAKLSTSFVLETFIHSKEKPTMLQWIELLTKQFNNSQAACEWFLDRMADDDWWPMQILIKCPNQIVRQMFQRLCIHVIQRLRPVHAHLYLQPGMEDGSDDMDASVEDIGGRSCVTRFVRTLLLIMEHGVKPHSKHLTEYFAFLYEFAKMGEEESQFLLSLQAISTMVHFYMGTKGPENPQVEVLSEEEGEEEEEEEDILSLAEEKYRPAALEKMIALVALLVEQSRSERHLTLSQTDMAALTGGKGFPFLFQHIRDGINIRQTCNLIFSLCRYNNRLAEHIVSMLFTSIAKLTPEAANPFFKLLTMLMEFAGGPPGMPPFASYILQRIWEVIEYNPSQCLDWLAVQTPRNKLAHSWVLQNMENWVERFLLAHNYPRVRTSAAYLLVSLIPSNSFRQMFRSTRSLHIPTRDLPLSPDTTVVLHQVYNVLLGLLSRAKLYVDAAVHGTTKLVPYLSFMTYCLISKTEKLMFSTYFMDLWNLFQPKLSEPAIATNHNKQALLSFWYNVCADCPENIRLIVQNPVVTKNIAFNYILADHDDQDVVLFNRGMLPAYYGILRLCCEQSPAFTRQLASHQNIQWAFKNLTPHASQYPGAVEELFNLMQLFIAQRPDMREEELEDIKQFKKTTISCYLRCLDGRSCWTTLISAFRILLESDEDRLLVVFNRGLILMTESFNTLHMMYHEATACHVTGDLVELLSIFLSVLKSTRPYLQRKDVKQALIQWQERIEFAHKLLTLLNSYSPPELRNACIDVLKELVLLSPHDFLHTLVPFLQHNHCTYHHSNIPMSLGPYFPCRENIKLIGGKSNIRPPRPELNMCLLPTMVETSKGKDDVYDRMLLDYFFSYHQFIHLLCRVAINCEKFTETLVKLSVLVAYEGLPLHLALFPKLWTELCQTQSAMSKNCIKLLCEDPVFAEYIKCILMDERTFLNNNIVYTFMTHFLLKVQSQVFSEANCASLISTLITNLINQYQNLQSDFTNRVEISKASAALNGDLRALALLLSVHTPKQLNPALIPTLQELLNKCRTCLQQRNSLQEQEAKERKTKDDEGATPVKRRRVSSDEEHTVDSCIGDIKTETREVLTPTSTSDNETRDSSIIDPGTEQDLPSPENSSVKEYRMEGPSSFSEDGSHIRSQHAEEQSNNGRFDDCKEFKDHCSKDTTLAEDESEFPSTSISAVLSDLADLRSCDGQALSSQDPEAAVSLSCGHSRGLISHMQQHDILDTLCRTIESTIHVVTRISGKGNQAAS.

Phosphoserine is present on residues S352, S486, S487, and S490. 5 disordered regions span residues 503-533 (EEEE…HQSG), 551-670 (QQRL…ELRN), 682-705 (GESQ…VFNT), 775-801 (HHHH…DGHM), and 1496-1515 (TGSY…DQVE). Residues 510 to 524 (AAPSPWSPAASPQSS) show a composition bias toward low complexity. The segment covering 560–570 (SMQGSSDETAN) has biased composition (polar residues). Positions 571–590 (SGEDGSSGPGSSSGHSDGSS) are enriched in low complexity. A compositionally biased stretch (polar residues) spans 591-609 (NEVNSSHASQSAGSPGSEV). Acidic residues predominate over residues 610-653 (QSEDIADIEALKEEEEEEEEEEEEEEEEDDEEEEDEEEDDDDDD). Polar residues predominate over residues 684-697 (SQGTSERNGTNSGT). The segment covering 775 to 798 (HHHHHHHHHHHHHHHHHHHHHHHD) has biased composition (basic residues). A compositionally biased stretch (acidic residues) spans 1504 to 1514 (PDSDDSSEDQV). Phosphoserine is present on S1506. The region spanning 1931–2276 (VGLTNLGATC…SAYMLFYKRM (346 aa)) is the USP domain. The active-site Nucleophile is the C1940. The active-site Proton acceptor is H2201. S2525 bears the Phosphoserine mark. A disordered region spans residues 3369-3484 (SLQEQEAKER…QSNNGRFDDC (116 aa)). The span at 3373–3384 (QEAKERKTKDDE) shows a compositional bias: basic and acidic residues. Phosphoserine occurs at positions 3395 and 3396. A Phosphothreonine modification is found at T3418. Phosphoserine occurs at positions 3423 and 3443. A compositionally biased stretch (basic and acidic residues) spans 3463–3484 (DGSHIRSQHAEEQSNNGRFDDC). S3539 is modified (phosphoserine).

This sequence belongs to the peptidase C19 family. In terms of assembly, interacts with AXIN1 and AXIN2.

The enzyme catalyses Thiol-dependent hydrolysis of ester, thioester, amide, peptide and isopeptide bonds formed by the C-terminal Gly of ubiquitin (a 76-residue protein attached to proteins as an intracellular targeting signal).. Ubiquitin hydrolase that can remove conjugated ubiquitin from AXIN1 and AXIN2, thereby acting as a regulator of Wnt signaling pathway. Acts as an activator of the Wnt signaling pathway downstream of the beta-catenin destruction complex by deubiquitinating and stabilizing AXIN1 and AXIN2, leading to promote nuclear accumulation of AXIN1 and AXIN2 and positively regulate beta-catenin (CTNBB1)-mediated transcription. Recognizes and hydrolyzes the peptide bond at the C-terminal Gly of ubiquitin. Involved in the processing of poly-ubiquitin precursors as well as that of ubiquitinated proteins. The polypeptide is Ubiquitin carboxyl-terminal hydrolase 34 (Usp34) (Mus musculus (Mouse)).